A 103-amino-acid polypeptide reads, in one-letter code: uncharacterized protein (103 aa).

This is an uncharacterized protein from Bacillus subtilis (strain 168).